The sequence spans 927 residues: Autophagy-related protein 13 (927 aa).

Disordered stretches follow at residues 1–66 (MHQQ…PPAD), 334–359 (SLPQQHATSRAPAAEAGSLRDHRSKP), 388–559 (LRSV…AQPG), 628–716 (TESM…TIRE), and 786–927 (QMQL…RRGW). Positions 14–30 (PGATTQPNLPSRSNSTR) are enriched in polar residues. 3 stretches are compositionally biased toward polar residues: residues 393–402 (QPGSDTSSPP), 513–523 (PASTSRYSSSF), and 544–557 (GSSGRQSLASSVAQ). The span at 630–671 (SMTSSVQMQRSSSSSSRQLTSVPGMTAPASVSASSSPGKPLS) shows a compositional bias: low complexity. Over residues 684-716 (LSENSIIDYSGQGRITSRQGRTSDNTQPGTIRE) the composition is skewed to polar residues. A compositionally biased stretch (basic and acidic residues) spans 793-803 (STQRPSDRLEP). A compositionally biased stretch (polar residues) spans 850–868 (HKQTPPQSSRGSFNGSLNR). A compositionally biased stretch (basic and acidic residues) spans 891 to 901 (PQGRRSIEEAR).

It belongs to the ATG13 family. Fungi subfamily. As to quaternary structure, hypophosphorylated form interacts with ATG1 to form the ATG1-ATG13 kinase complex. The ATG1-ATG13 complex interacts with the ATG17-ATG29-ATG31 complex through direct interaction with ATG17.

It localises to the cytoplasm. It is found in the preautophagosomal structure. Its function is as follows. Activates the ATG1 kinase in a nutritional condition dependent manner through the TOR pathway, leading to autophagy. Involved in ATG9 and ATG23 cycling through the pre-autophagosomal structure. Also involved in cytoplasm to vacuole transport (Cvt) and more specifically in Cvt vesicle formation. Seems to play a role in the switching machinery regulating the conversion between the Cvt pathway and autophagy. Finally, ATG13 is also required for glycogen storage during stationary phase. Autophagy is required for proper vegetative growth, asexual/sexual reproduction, and full virulence. Autophagy is particularly involved in the biosynthesis of deoxynivalenol (DON), an important virulence determinant. The sequence is that of Autophagy-related protein 13 from Gibberella zeae (strain ATCC MYA-4620 / CBS 123657 / FGSC 9075 / NRRL 31084 / PH-1) (Wheat head blight fungus).